Reading from the N-terminus, the 280-residue chain is Lysosome-associated membrane glycoprotein 5 (280 aa).

Residues 1–29 form the signal peptide; it reads MDLRVRTLLGGDRLRILLMFFHVMVQTVA. Over 30 to 235 the chain is Extracellular; it reads EQEVENLSGL…PVDEQEQLEE (206 aa). Residues asparagine 35, asparagine 53, asparagine 102, and asparagine 127 are each glycosylated (N-linked (GlcNAc...) asparagine). The helical transmembrane segment at 236 to 256 threads the bilayer; sequence TLPLILGLILGLVIVITLVIY. The Cytoplasmic segment spans residues 257–280; that stretch reads HIHHKMTANQVQIPRDRSQYKHMG.

This sequence belongs to the LAMP family. In terms of processing, glycosylated. As to expression, in brain, strongly expressed in the globus pallidus/ventral pallidum complex, the substantia nigra pars reticulata and the entopeduncular nucleus (at protein level). Expressed in the external plexiform layer of the olfactory bulb (at protein level). May be weakly expressed in neocortex and striatum (at protein level). Highly expressed in brain; not detected in other tissues tested. Detected in the cingulate cortex, cortical plate and caudate putamen. In neocortex, specifically expressed in neurons of layers II/III and V.

It localises to the cytoplasmic vesicle membrane. It is found in the cell membrane. Its subcellular location is the cell projection. The protein localises to the dendrite. The protein resides in the cytoplasmic vesicle. It localises to the secretory vesicle. It is found in the synaptic vesicle membrane. Its subcellular location is the growth cone membrane. The protein localises to the early endosome membrane. The protein resides in the recycling endosome. It localises to the endoplasmic reticulum-Golgi intermediate compartment membrane. It is found in the endosome membrane. Functionally, plays a role in short-term synaptic plasticity in a subset of GABAergic neurons in the brain. The chain is Lysosome-associated membrane glycoprotein 5 (Lamp5) from Mus musculus (Mouse).